We begin with the raw amino-acid sequence, 379 residues long: Cytochrome b (379 aa).

A run of 4 helical transmembrane segments spans residues 33–53 (FGSL…FLAM), 77–98 (WLIR…FIHV), 113–133 (WNIG…GYVL), and 178–198 (FFAF…VHLL). 2 residues coordinate heme b: histidine 83 and histidine 97. Heme b is bound by residues histidine 182 and histidine 196. Position 201 (histidine 201) interacts with a ubiquinone. 4 helical membrane-spanning segments follow: residues 226–246 (IKDL…ALFF), 288–308 (LGGV…PLLN), 320–340 (ITQT…WIGG), and 347–367 (FTTI…ILMP).

The protein belongs to the cytochrome b family. In terms of assembly, the cytochrome bc1 complex contains 11 subunits: 3 respiratory subunits (MT-CYB, CYC1 and UQCRFS1), 2 core proteins (UQCRC1 and UQCRC2) and 6 low-molecular weight proteins (UQCRH/QCR6, UQCRB/QCR7, UQCRQ/QCR8, UQCR10/QCR9, UQCR11/QCR10 and a cleavage product of UQCRFS1). This cytochrome bc1 complex then forms a dimer. Requires heme b as cofactor.

The protein resides in the mitochondrion inner membrane. In terms of biological role, component of the ubiquinol-cytochrome c reductase complex (complex III or cytochrome b-c1 complex) that is part of the mitochondrial respiratory chain. The b-c1 complex mediates electron transfer from ubiquinol to cytochrome c. Contributes to the generation of a proton gradient across the mitochondrial membrane that is then used for ATP synthesis. This Akodon aerosus (Highland grass mouse) protein is Cytochrome b (MT-CYB).